The sequence spans 570 residues: Interleukin-1 receptor accessory protein (570 aa).

A signal peptide spans 1–20 (MGLLWYLMSLSFYGILQSHA). 3 Ig-like C2-type domains span residues 21–128 (SERC…VAFP), 139–230 (NSAM…RTVT), and 243–348 (PQIY…AKVK). Residues 21–367 (SERCDDWGLD…VELACGFGAT (347 aa)) lie on the Extracellular side of the membrane. 5 cysteine pairs are disulfide-bonded: Cys24/Cys122, Cys47/Cys114, Cys137/Cys181, Cys160/Cys212, and Cys266/Cys332. Asn57 is a glycosylation site (N-linked (GlcNAc...) asparagine). The segment at 69–85 (IWYWTRQDRDLEEPINF) is essential for interaction with PTPRD. 3 N-linked (GlcNAc...) asparagine glycosylation sites follow: Asn107, Asn111, and Asn118. Residues Asn196, Asn209, and Asn299 are each glycosylated (N-linked (GlcNAc...) asparagine). The helical transmembrane segment at 368 to 388 (VFLVVVLIVVYHVYWLEMVLF) threads the bilayer. Residues 389-570 (YRAHFGTDET…GLSYSSLKNV (182 aa)) are Cytoplasmic-facing. The TIR domain maps to 403-546 (KEYDIYVSYA…RFWKQLQVAM (144 aa)). Glu482 is an active-site residue. The disordered stretch occupies residues 550-570 (KSPRWSSNDKQGLSYSSLKNV). Residues 553 to 570 (RWSSNDKQGLSYSSLKNV) are compositionally biased toward polar residues.

Belongs to the interleukin-1 receptor family. As to quaternary structure, the interleukin-36 receptor complex is a heterodimer of IL1RL2 and IL1RAP; the association is inhibited by IL36RN. The interleukin-1 receptor complex is a heterodimer of IL1R1 and IL1RAP. Associates with IL1R2 to form a non-signaling interleukin-1 receptor complex. Interacts with IL-33-bound IL1RL1 to form the minimal interleukin-33 signaling complex with a 1:1:1 stoichiometry. Interacts with KIT (independently of stimulation with KITLG/SCF). A mast cell-specific KITLG/SCF-induced interleukin-33 signaling complex contains IL1RL1, IL1RAP, KIT and MYD88. Interacts (via the first immunoglobilin domain) with PTPRD (via the third immunoglobilin domain); induces pre- and postsynaptic differentiation of neurons. In terms of tissue distribution, detected in lung, brain, spleen, thymus and liver. Expressed in brain endothelial cells, astrocytes, microglia and neurons. Isoform 3 is predominantly expressed in brain; expressed in hippocampal neurons.

The protein resides in the cell membrane. It is found in the secreted. The enzyme catalyses NAD(+) + H2O = ADP-D-ribose + nicotinamide + H(+). Its function is as follows. Coreceptor for IL1RL2 in the IL-36 signaling system. Coreceptor with IL1R1 in the IL-1 signaling system. Associates with IL1R1 bound to IL1B to form the high affinity interleukin-1 receptor complex which mediates interleukin-1-dependent activation of NF-kappa-B and other pathways. Signaling involves the recruitment of adapter molecules such as TOLLIP, MYD88, and IRAK1 or IRAK2 via the respective TIR domains of the receptor/coreceptor subunits. Recruits TOLLIP to the signaling complex. Does not bind to interleukin-1 alone; binding of IL1RN to IL1R1, prevents its association with IL1R1 to form a signaling complex. The cellular response is modulated through a non-signaling association with the membrane IL1R2 decoy receptor. Secreted forms (isoforms 2 and 3) associate with secreted ligand-bound IL1R2 and increase the affinity of secreted IL1R2 for IL1B; this complex formation may be the dominant mechanism for neutralization of IL1B by secreted/soluble receptors. Coreceptor for IL1RL1 in the IL-33 signaling system. Can bidirectionally induce pre- and postsynaptic differentiation of neurons by trans-synaptically binding to PTPRD. May play a role in IL1B-mediated costimulation of IFNG production from T-helper 1 (Th1) cells. In terms of biological role, associates with secreted ligand-bound IL1R2 and increases the affinity of secreted IL1R2 for IL1B; this complex formation may be the dominant mechanism for neutralization of IL1B by secreted/soluble receptors. Enhances the ability of secreted IL1R1 to inhibit IL-33 signaling. Required for Src phosphorylation by IL1B. Required for IL1B-potentiated NMDA-induced calcium influx in neurons acting in cooperation with IL1R1 isoform 2 to mediate Akt kinase activation. The chain is Interleukin-1 receptor accessory protein (Il1rap) from Mus musculus (Mouse).